The primary structure comprises 606 residues: Ectonucleoside triphosphate diphosphohydrolase 7 (606 aa).

The Cytoplasmic segment spans residues 1–28 (MARISFSYLCPASWYFTVPTVSPFLRQR). A helical membrane pass occupies residues 29–49 (VAFLGLFFIPCVLLLLLIMDL). Residues 50–548 (RHWATSLPRD…PAHGSWLRLS (499 aa)) are Vesicular-facing. Catalysis depends on E217, which acts as the Proton acceptor. The N-linked (GlcNAc...) asparagine glycan is linked to N330. A disulfide bond links C448 and C477. Residues 549 to 569 (FVYNHYLFFACTLVVLLAIVL) traverse the membrane as a helical segment. The Cytoplasmic portion of the chain corresponds to 570 to 606 (YLLRIHRIHRRQTRASAPLDLLWIEQVVPMIGVQVGP).

It belongs to the GDA1/CD39 NTPase family. It depends on Ca(2+) as a cofactor. Mg(2+) is required as a cofactor. Widely expressed. Expressed at high level in brain, kidney, liver, testis and small intestin. Weakly expressed in lung, thymus and heart.

Its subcellular location is the cytoplasmic vesicle membrane. It catalyses the reaction a ribonucleoside 5'-triphosphate + H2O = a ribonucleoside 5'-diphosphate + phosphate + H(+). It carries out the reaction UTP + H2O = UDP + phosphate + H(+). The enzyme catalyses GTP + H2O = GDP + phosphate + H(+). The catalysed reaction is CTP + H2O = CDP + phosphate + H(+). It catalyses the reaction ATP + H2O = ADP + phosphate + H(+). In terms of biological role, catalyzes the hydrolysis of nucleoside triphosphates and diphosphates in a calcium- or magnesium-dependent manner. Preferentially hydrolyzes nucleoside 5'-triphosphates, with substrate preference for UTP &gt; GTP &gt; CTP. Hydrolyzes nucleoside diphosphates only to a minor extent. In contrast to its human ortholog is able to hydrolyze ATP. In the epithelial cells of small intestine controls luminal ATP levels, therefore regulating Th17-cell development. The sequence is that of Ectonucleoside triphosphate diphosphohydrolase 7 (Entpd7) from Mus musculus (Mouse).